The chain runs to 400 residues: tRNA(Met) cytidine acetate ligase (400 aa).

Residues I7–H20, G101, N162, and R187 contribute to the ATP site.

This sequence belongs to the TmcAL family.

The protein resides in the cytoplasm. It carries out the reaction cytidine(34) in elongator tRNA(Met) + acetate + ATP = N(4)-acetylcytidine(34) in elongator tRNA(Met) + AMP + diphosphate. Its function is as follows. Catalyzes the formation of N(4)-acetylcytidine (ac(4)C) at the wobble position of elongator tRNA(Met), using acetate and ATP as substrates. First activates an acetate ion to form acetyladenylate (Ac-AMP) and then transfers the acetyl group to tRNA to form ac(4)C34. The sequence is that of tRNA(Met) cytidine acetate ligase from Oceanobacillus iheyensis (strain DSM 14371 / CIP 107618 / JCM 11309 / KCTC 3954 / HTE831).